A 2061-amino-acid chain; its full sequence is Putative PWWP domain-containing DNA repair factor 4 (2061 aa).

Disordered regions lie at residues 101-211 (TNLG…SRAR), 382-408 (ALGRDRSRARSAIASTPGTLQGNRSSV), 541-586 (TPGT…GDGS), 668-694 (PATLRGEKSRAHTSLAPAPGALRGDGS), 864-910 (PTPG…SERS), 1046-1072 (PGTMRGDSSTARTATAPSPGALRGDRS), 1159-1182 (ALHGDSSQAHTAIAPTPGTMRGDS), 1205-1383 (KAIA…RDDK), 1521-1548 (PGALHSDRSQTHTAIDPTPSVLRSDSSP), and 1602-1726 (KKGK…KLAN). 2 stretches are compositionally biased toward basic and acidic residues: residues 133-153 (PREDDWRCKGDLRRSLGKREN) and 162-173 (ESKRALRDDRSQ). A compositionally biased stretch (polar residues) spans 397 to 408 (TPGTLQGNRSSV). Positions 1051–1061 (GDSSTARTATA) are enriched in polar residues. Over residues 1364–1373 (DSSQVHTTIA) the composition is skewed to polar residues. Residues 1639–1648 (LKEETQDSRP) are compositionally biased toward basic and acidic residues. Polar residues predominate over residues 1656–1665 (PESSPFSGNI). In terms of domain architecture, PWWP spans 1756–1817 (RGTMVWFKFQ…KHLDCKEKEK (62 aa)).

The protein belongs to the PWWP3A family.

The sequence is that of Putative PWWP domain-containing DNA repair factor 4 from Homo sapiens (Human).